The sequence spans 166 residues: NADH-ubiquinone oxidoreductase chain 6 (166 aa).

The next 5 membrane-spanning stretches (helical) occupy residues 1 to 21 (MMYF…AFAS), 26 to 46 (IYGG…IVSL), 47 to 67 (GGSF…LVVF), 86 to 106 (TVVL…YEFF), and 139 to 159 (CGGW…FVVL).

It belongs to the complex I subunit 6 family. Core subunit of respiratory chain NADH dehydrogenase (Complex I) which is composed of 45 different subunits.

The protein localises to the mitochondrion inner membrane. The enzyme catalyses a ubiquinone + NADH + 5 H(+)(in) = a ubiquinol + NAD(+) + 4 H(+)(out). Its function is as follows. Core subunit of the mitochondrial membrane respiratory chain NADH dehydrogenase (Complex I) which catalyzes electron transfer from NADH through the respiratory chain, using ubiquinone as an electron acceptor. Essential for the catalytic activity and assembly of complex I. In Tachyglossus aculeatus aculeatus (Southeast Australian short-beaked echidna), this protein is NADH-ubiquinone oxidoreductase chain 6 (MT-ND6).